The following is a 937-amino-acid chain: Translation initiation factor IF-2 (937 aa).

Disordered regions lie at residues 157 to 230 and 250 to 346; these read KEAQ…AARK and IKAP…ESNF. Basic and acidic residues predominate over residues 173-205; the sequence is EAQKADAAKPVEAKADESAQEEKKRVAAEESKK. Residues 252–265 show a composition bias toward low complexity; it reads APEPAAPVAAKPAE. A compositionally biased stretch (basic and acidic residues) spans 267–293; the sequence is TLHKPADKKAGEKKDEKKPAVTADKKS. Over residues 295–304 the composition is skewed to polar residues; that stretch reads KSANVSSTWQ. The tr-type G domain maps to 437-606; that stretch reads PRAPVVTVMG…LLQAEVLELK (170 aa). The interval 446-453 is G1; it reads GHVDHGKT. 446 to 453 serves as a coordination point for GTP; it reads GHVDHGKT. The tract at residues 471–475 is G2; it reads GITQH. Residues 492-495 are G3; that stretch reads DTPG. GTP is bound by residues 492–496 and 546–549; these read DTPGH and NKID. Residues 546 to 549 are G4; it reads NKID. The interval 582 to 584 is G5; the sequence is SAK.

The protein belongs to the TRAFAC class translation factor GTPase superfamily. Classic translation factor GTPase family. IF-2 subfamily.

It localises to the cytoplasm. In terms of biological role, one of the essential components for the initiation of protein synthesis. Protects formylmethionyl-tRNA from spontaneous hydrolysis and promotes its binding to the 30S ribosomal subunits. Also involved in the hydrolysis of GTP during the formation of the 70S ribosomal complex. The chain is Translation initiation factor IF-2 from Janthinobacterium sp. (strain Marseille) (Minibacterium massiliensis).